A 932-amino-acid polypeptide reads, in one-letter code: Valine--tRNA ligase (932 aa).

The 'HIGH' region signature appears at 75–85 (PNVTGQLHMGH). Residues 568–572 (KMSKS) carry the 'KMSKS' region motif. An ATP-binding site is contributed by Lys-571. The stretch at 863 to 929 (TVDVAAERKR…ERITARLEGL (67 aa)) forms a coiled coil.

The protein belongs to the class-I aminoacyl-tRNA synthetase family. ValS type 1 subfamily. As to quaternary structure, monomer.

Its subcellular location is the cytoplasm. It catalyses the reaction tRNA(Val) + L-valine + ATP = L-valyl-tRNA(Val) + AMP + diphosphate. In terms of biological role, catalyzes the attachment of valine to tRNA(Val). As ValRS can inadvertently accommodate and process structurally similar amino acids such as threonine, to avoid such errors, it has a 'posttransfer' editing activity that hydrolyzes mischarged Thr-tRNA(Val) in a tRNA-dependent manner. This chain is Valine--tRNA ligase, found in Corynebacterium jeikeium (strain K411).